A 37-amino-acid chain; its full sequence is Large ribosomal subunit protein bL36 (37 aa).

Belongs to the bacterial ribosomal protein bL36 family.

The polypeptide is Large ribosomal subunit protein bL36 (Nostoc sp. (strain PCC 7120 / SAG 25.82 / UTEX 2576)).